The chain runs to 208 residues: FMN-dependent NADH:quinone oxidoreductase 1 (208 aa).

Residue serine 10 coordinates FMN.

This sequence belongs to the azoreductase type 1 family. Homodimer. FMN is required as a cofactor.

The enzyme catalyses 2 a quinone + NADH + H(+) = 2 a 1,4-benzosemiquinone + NAD(+). The catalysed reaction is N,N-dimethyl-1,4-phenylenediamine + anthranilate + 2 NAD(+) = 2-(4-dimethylaminophenyl)diazenylbenzoate + 2 NADH + 2 H(+). Functionally, quinone reductase that provides resistance to thiol-specific stress caused by electrophilic quinones. Contributes to resistance to 2-methylhydroquinone (2-MHQ) and catechol. Also exhibits azoreductase activity. Catalyzes the reductive cleavage of the azo bond in aromatic azo compounds to the corresponding amines. The chain is FMN-dependent NADH:quinone oxidoreductase 1 from Bacillus subtilis (strain 168).